Here is an 893-residue protein sequence, read N- to C-terminus: MSREGYPNFEEVEIPDFQETNNTVPDLDDLELEYDQYKNNENNDTFNDKDLESNSVAKHNAVNSSKGVKGSKIDYFNPSDVSLYDNSVSQFEETTVSLKEYYDHSIRSHLTVKGACSYLKSVFPIINWLPHYNFSWFTADLIAGITIGCVLVPQSMSYAQVATLPAQYGLYSSFIGAYSYSFFATSKDVCIGPVAVMSLQTAKVIADVTAKYPDGDSAITGPVIATTLALLCGIISAAVGFLRLGFLVELISLNAVAGFMTGSAFNILWGQVPALMGYNSLVNTRAATYKVVIETLKHLPDTKLDAVFGLIPLFLLYVWKWWCGTYGPRLNDRYNSKNPRLHKIIKWTYFYAQASRNGIIIIVFTCIGWAITRGKSKSERPISILGSVPSGLKEVGVFHVPPGLMSKLGPNLPASIIVLLLEHIAISKSFGRINDYKVVPDQELIAIGVSNLLGTFFNAYPATGSFSRSALKAKCNVRTPLSGLFSGSCVLLALYCLTGAFFYIPKATLSAVIIHAVSDLLASYQTTWNFWKMNPLDFICFIVTVLITVFASIEDGIYFAMCWSCAMLILKVAFPAGKFLGRVEVAEVTDAYVRPDSDVVSYVSENNNGISTLEDGGEDDKESSTKYVTNSSKKIETNVQTKGFDSPSSSISQPRIKYHTKWIPFDHKYTRELNPDVQILPPPDGVLVYRLSESYTYLNCSRHYNIITEEVKKVTRRGQLIRHRKKSDRPWNDPGPWEAPAFLKNLKFWKKRENDPESMENAPSTSVDVERDDRPLLKILCLDFSQVAQTDATALQSLVDLRKAINQYADRQVEFHFVGIISPWVKRGLISRGFGTLNEEYSDESIVAGHTSYHVARVPQGEENPEKYSVYTASGTNLPFFHIDIPDFAKWDI.

The disordered stretch occupies residues 1 to 25; that stretch reads MSREGYPNFEEVEIPDFQETNNTVP. Residues 1–131 are Cytoplasmic-facing; that stretch reads MSREGYPNFE…VFPIINWLPH (131 aa). A helical membrane pass occupies residues 132–152; the sequence is YNFSWFTADLIAGITIGCVLV. At 153-163 the chain is on the extracellular side; it reads PQSMSYAQVAT. A helical transmembrane segment spans residues 164-184; the sequence is LPAQYGLYSSFIGAYSYSFFA. The Cytoplasmic portion of the chain corresponds to 185-188; sequence TSKD. A helical transmembrane segment spans residues 189-209; it reads VCIGPVAVMSLQTAKVIADVT. The Extracellular segment spans residues 210 to 221; sequence AKYPDGDSAITG. Residues 222 to 242 traverse the membrane as a helical segment; that stretch reads PVIATTLALLCGIISAAVGFL. At 243 to 244 the chain is on the cytoplasmic side; that stretch reads RL. A helical transmembrane segment spans residues 245–265; it reads GFLVELISLNAVAGFMTGSAF. The Extracellular portion of the chain corresponds to 266-305; that stretch reads NILWGQVPALMGYNSLVNTRAATYKVVIETLKHLPDTKLD. The chain crosses the membrane as a helical span at residues 306–326; sequence AVFGLIPLFLLYVWKWWCGTY. At 327 to 350 the chain is on the cytoplasmic side; the sequence is GPRLNDRYNSKNPRLHKIIKWTYF. A helical transmembrane segment spans residues 351 to 371; it reads YAQASRNGIIIIVFTCIGWAI. Over 372 to 399 the chain is Extracellular; sequence TRGKSKSERPISILGSVPSGLKEVGVFH. A helical transmembrane segment spans residues 400-420; the sequence is VPPGLMSKLGPNLPASIIVLL. Residues 421–443 are Cytoplasmic-facing; sequence LEHIAISKSFGRINDYKVVPDQE. The helical transmembrane segment at 444–464 threads the bilayer; it reads LIAIGVSNLLGTFFNAYPATG. Over 465-483 the chain is Extracellular; sequence SFSRSALKAKCNVRTPLSG. The helical transmembrane segment at 484 to 504 threads the bilayer; sequence LFSGSCVLLALYCLTGAFFYI. Over 505–532 the chain is Cytoplasmic; that stretch reads PKATLSAVIIHAVSDLLASYQTTWNFWK. Residues 533-551 traverse the membrane as a helical segment; the sequence is MNPLDFICFIVTVLITVFA. Residues 552-559 lie on the Extracellular side of the membrane; it reads SIEDGIYF. Residues 560-580 traverse the membrane as a helical segment; it reads AMCWSCAMLILKVAFPAGKFL. Topologically, residues 581–893 are cytoplasmic; it reads GRVEVAEVTD…DIPDFAKWDI (313 aa). An STAS domain is found at 676–854; the sequence is DVQILPPPDG…SIVAGHTSYH (179 aa).

Belongs to the SLC26A/SulP transporter (TC 2.A.53) family.

It localises to the membrane. Its function is as follows. High affinity uptake of sulfate into the cell. This Saccharomyces cerevisiae (strain ATCC 204508 / S288c) (Baker's yeast) protein is Sulfate permease 2 (SUL2).